We begin with the raw amino-acid sequence, 330 residues long: ATP-dependent Clp protease proteolytic subunit-related protein 3, chloroplastic (330 aa).

The N-terminal 43 residues, 1–43 (MASCLQASMNSLLPRSSSFSPHPPLSSNSSGRRNLKTFRYAFR), are a transit peptide targeting the chloroplast. The interval 7-32 (ASMNSLLPRSSSFSPHPPLSSNSSGR) is disordered. The segment covering 8 to 30 (SMNSLLPRSSSFSPHPPLSSNSS) has biased composition (low complexity).

The protein belongs to the peptidase S14 family. Component of the chloroplastic Clp protease core complex which consist of at least 16 proteins: CLPP4 (3 copies), CLPP5 (3 copies), CLPR4 (2 copies), ClpP1 (1 copy), CLPP6 (1 copy), CLPR2 (1 copy), CLPT1 (1 copy), CLPT2 (1 copy) and 3 copies of CLPP3 and/or CLPR1 and/or CLPR3. The core complex is organized in two heptameric rings, one containing CLPP3,4,5,6 in a 1:2:3:1 ratio and the other CLPP1 and CLPR1,2,3,4 in a 3:1:1:1:1 ratio.

It localises to the plastid. It is found in the chloroplast. The sequence is that of ATP-dependent Clp protease proteolytic subunit-related protein 3, chloroplastic from Arabidopsis thaliana (Mouse-ear cress).